Reading from the N-terminus, the 723-residue chain is Cyclin-T2 (723 aa).

The segment at 1–298 (MASGRGASSR…SVTGVPANPS (298 aa)) is interaction with MDFIC and MDFI. Residues 12-147 (FFTREQLENT…IMLQTLGFEI (136 aa)) enclose the Cyclin N-terminal domain. An interaction with POLR2A region spans residues 250 to 298 (RLKRIRNWRAMAKKPKVDGQVSETPLLGSSLVQNSILVDSVTGVPANPS). Composition is skewed to polar residues over residues 297–307 (PSFQKPSTSTF) and 314–325 (NSGSTSVQDSRA). 4 disordered regions span residues 297-325 (PSFQ…DSRA), 340-364 (SYSL…VYTQ), 385-428 (ALHS…GMLP), and 458-645 (AEQQ…SSVK). Residues 395–409 (DKVADHSSAKQEYTH) show a composition bias toward basic and acidic residues. A Glycyl lysine isopeptide (Lys-Gly) (interchain with G-Cter in SUMO2) cross-link involves residue Lys404. At Ser477 the chain carries Phosphoserine. Composition is skewed to basic and acidic residues over residues 489–503 (DRPE…ERSG), 517–543 (GPSK…EGSG), and 552–565 (ISRD…EHPA). The segment covering 566–576 (NRHHSSHKYLH) has biased composition (basic residues). Ser596 is modified (phosphoserine). Residues 631–645 (SSKSAGSSSSSSSVK) show a composition bias toward low complexity.

The protein belongs to the cyclin family. Cyclin C subfamily. As to quaternary structure, interacts with CDK9 to form P-TEFb. Interacts with POLR2A (via the C-terminal domain (CTD)); mediates transcriptional activity. Interacts with HEXIM1; mediates formation of a tripartite complex with KPNA2. Interacts with HEXIM2. Interacts with PKN1; enhances MYOD1-dependent transcription. P-TEFB complex interacts with RB1; promotes phosphorylation of RB1. P-TEFB complex interacts with MYOD1; promotes the transcriptional activity of MYOD1 through its CDK9-mediated phosphorylation. Interacts with MDFI and MDFIC. Highly expressed in all phases of skeletal muscle differentiation, particularly in later stages. Highly expressed in skeletal muscle. Significantly expressed in heart, brain, kidney, liver, testis, and pancreas.

It is found in the cytoplasm. Its subcellular location is the perinuclear region. It localises to the nucleus. Functionally, regulatory subunit of the cyclin-dependent kinase pair (CDK9/cyclin T) complex, also called positive transcription elongation factor B (P-TEFB), which is proposed to facilitate the transition from abortive to production elongation by phosphorylating the CTD (carboxy-terminal domain) of the large subunit of RNA polymerase II (RNAP II). The activity of this complex is regulated by binding with 7SK snRNA. Plays a role during muscle differentiation; P-TEFB complex interacts with MYOD1; this tripartite complex promotes the transcriptional activity of MYOD1 through its CDK9-mediated phosphorylation and binds the chromatin of promoters and enhancers of muscle-specific genes; this event correlates with hyperphosphorylation of the CTD domain of RNA pol II. In addition, enhances MYOD1-dependent transcription through interaction with PKN1. Involved in early embryo development. This Mus musculus (Mouse) protein is Cyclin-T2.